A 139-amino-acid polypeptide reads, in one-letter code: Large-conductance mechanosensitive channel (139 aa).

2 helical membrane-spanning segments follow: residues 9–29 (AFAV…GAAF) and 79–99 (IQTV…VKAI).

It belongs to the MscL family. In terms of assembly, homopentamer.

The protein localises to the cell inner membrane. In terms of biological role, channel that opens in response to stretch forces in the membrane lipid bilayer. May participate in the regulation of osmotic pressure changes within the cell. In Pseudomonas putida (strain W619), this protein is Large-conductance mechanosensitive channel.